The chain runs to 121 residues: Small ribosomal subunit protein uS13 (121 aa).

Positions 93–121 are disordered; sequence RNLPVRGQRTRTNARTCKGPRKSMNKQFK. Residues 110–121 show a composition bias toward basic residues; that stretch reads KGPRKSMNKQFK.

It belongs to the universal ribosomal protein uS13 family. As to quaternary structure, part of the 30S ribosomal subunit. Forms a loose heterodimer with protein S19. Forms two bridges to the 50S subunit in the 70S ribosome.

In terms of biological role, located at the top of the head of the 30S subunit, it contacts several helices of the 16S rRNA. In the 70S ribosome it contacts the 23S rRNA (bridge B1a) and protein L5 of the 50S subunit (bridge B1b), connecting the 2 subunits; these bridges are implicated in subunit movement. Contacts the tRNAs in the A and P-sites. This chain is Small ribosomal subunit protein uS13, found in Blochmanniella pennsylvanica (strain BPEN).